The sequence spans 1202 residues: Caskin-2 (1202 aa).

ANK repeat units lie at residues 48 to 77 (DGFS…TVDI), 81 to 110 (NGMR…AVNA), 114 to 143 (DGQI…NPCL), 147 to 176 (AKKT…CVAL), 188 to 217 (NYTT…EINR), and 220 to 249 (KTGT…DVNI). Y253 carries the post-translational modification Phosphotyrosine. One can recognise an SH3 domain in the interval 281–347 (SGILKVRALK…PPGIVEVVSK (67 aa)). A disordered region spans residues 355–460 (RLPSAPTPLR…GLHPPSLADN (106 aa)). Phosphoserine is present on residues S358, S393, S396, S403, S406, and S409. Residues 415–425 (SAGSGQSSEGT) are compositionally biased toward polar residues. S471 is modified (phosphoserine). 2 SAM domains span residues 489-552 (KDAQ…LSIA) and 558-622 (YIPT…LAEL). Disordered regions lie at residues 676-1104 (LQAA…APKP) and 1116-1181 (GPKL…STKH). Residue S725 is modified to Phosphoserine. Basic and acidic residues predominate over residues 731 to 740 (NLPEGTERPP). A compositionally biased stretch (pro residues) spans 765 to 774 (SPAPGPPPGA). Phosphoserine is present on residues S858, S877, S878, and S892. Residues 913–923 (PSEPPGPPAPA) show a composition bias toward pro residues. A compositionally biased stretch (low complexity) spans 940–949 (PPSRGSSGEG). Composition is skewed to pro residues over residues 966–978 (PAGP…PVPP) and 1018–1030 (PAAP…PGES). The segment covering 1031–1051 (PPASSLPQPEPSSLPAQGVPT) has biased composition (low complexity). Pro residues-rich tracts occupy residues 1052 to 1068 (PLAP…PCPG) and 1124 to 1133 (GPRPVPPPRP). Residues 1135–1151 (STGTVGPGQAQQRLEQT) are compositionally biased toward polar residues. A compositionally biased stretch (basic and acidic residues) spans 1161–1172 (AAEKSIGTKEQE).

In terms of assembly, may not bind CASK.

It is found in the cytoplasm. The protein is Caskin-2 (CASKIN2) of Homo sapiens (Human).